Here is a 157-residue protein sequence, read N- to C-terminus: UPF0262 protein RHECIAT_CH0000657 (157 aa).

Belongs to the UPF0262 family.

The protein is UPF0262 protein RHECIAT_CH0000657 of Rhizobium etli (strain CIAT 652).